The sequence spans 143 residues: Large-conductance mechanosensitive channel (143 aa).

The next 2 helical transmembrane spans lie at 16-36 (VIDL…VTAL) and 84-104 (INTV…VKLI).

The protein belongs to the MscL family. As to quaternary structure, homopentamer.

The protein resides in the cell inner membrane. Channel that opens in response to stretch forces in the membrane lipid bilayer. May participate in the regulation of osmotic pressure changes within the cell. This is Large-conductance mechanosensitive channel from Xanthomonas axonopodis pv. citri (strain 306).